The sequence spans 431 residues: ABSCISIC ACID-INSENSITIVE 5-like protein 7 (431 aa).

Residues 1–29 (MGTHINFNNLGGGGHPGGEGSSNQMKPTG) are disordered. Over residues 10-20 (LGGGGHPGGEG) the composition is skewed to gly residues. A phosphoserine mark is found at Ser39 and Ser61. Ser110 is modified (phosphoserine; by CPK32). The tract at residues 133-153 (DGNMEGSSGGGGESNVPPGRQ) is disordered. Thr155 is modified (phosphothreonine). Polar residues predominate over residues 319 to 331 (SPGTSSAENNSLS). A disordered region spans residues 319–338 (SPGTSSAENNSLSPVPYVLN). The Nuclear localization signal signature appears at 340–347 (GRRSNTGL). The 64-residue stretch at 351-414 (IERRQRRMIK…KNELKETSKR (64 aa)) folds into the bZIP domain. The basic motif stretch occupies residues 353-372 (RRQRRMIKNRESAARSRARK). The stretch at 372-411 (KQAYTLELEAEIEKLKKTNQELQKKQAEMVEMQKNELKET) forms a coiled coil. Positions 379–393 (LEAEIEKLKKTNQEL) are leucine-zipper.

This sequence belongs to the bZIP family. ABI5 subfamily. DNA-binding heterodimer. Interacts with CPK32 and the AFP proteins AFP1, AFP2 and AFP3. Interacts with FREE1 (via C-terminus). Phosphorylated by CPK4 and CPK11 in vitro. In terms of tissue distribution, expressed in roots, leaves, flowers and immatures siliques.

Its subcellular location is the nucleus. Functions as a transcriptional activator in the ABA-inducible expression of LTI65/RD29B (AC Q04980). Binds specifically to the ABA-responsive element (ABRE) of the LTI65/RD29B (AC Q04980) gene promoter. Binds to the promoter of FREE1 and activates its transcription. In Arabidopsis thaliana (Mouse-ear cress), this protein is ABSCISIC ACID-INSENSITIVE 5-like protein 7.